Here is a 118-residue protein sequence, read N- to C-terminus: Large ribosomal subunit protein eL18 (118 aa).

Belongs to the eukaryotic ribosomal protein eL18 family.

The polypeptide is Large ribosomal subunit protein eL18 (rpl18e) (Sulfolobus acidocaldarius (strain ATCC 33909 / DSM 639 / JCM 8929 / NBRC 15157 / NCIMB 11770)).